The primary structure comprises 77 residues: Conodipine-M alpha chain (77 aa).

At glutamine 1 the chain carries Pyrrolidone carboxylic acid. The active site involves histidine 36.

As to quaternary structure, heterodimer of an alpha and a beta chains; probably disulfide-linked. Ca(2+) is required as a cofactor. Expressed by the venom duct.

It is found in the secreted. The enzyme catalyses a 1,2-diacyl-sn-glycero-3-phosphocholine + H2O = a 1-acyl-sn-glycero-3-phosphocholine + a fatty acid + H(+). Its activity is regulated as follows. Inhibited by linoleoyl amide and MG14. Its function is as follows. Heterodimer: conodipine-M catalyzes the calcium-dependent hydrolysis of the 2-acyl groups in 3-sn-phosphoglycerides. This activity may be supported by the alpha chain. Conodipine-M inhibits the binding of isradipine (a ligand specific for L-type calcium channel) to L-type calcium channels. This is Conodipine-M alpha chain from Conus magus (Magical cone).